A 752-amino-acid polypeptide reads, in one-letter code: Two pore channel protein 2 (752 aa).

Residues 1 to 84 are Cytoplasmic-facing; it reads MAEPQAESEP…RRYYSNVCQR (84 aa). Residues 85-105 form a helical membrane-spanning segment; the sequence is TLSFTIFLILFLAFIETPSSL. The Extracellular segment spans residues 106–127; that stretch reads TSTADVRYRAAPWEPPCGLTES. The helical transmembrane segment at 128–148 threads the bilayer; sequence VEVLCLLVFAADLSVKGYLFG. The Cytoplasmic portion of the chain corresponds to 149 to 155; the sequence is WAHFQKN. The helical transmembrane segment at 156 to 176 threads the bilayer; it reads LWLLGYLVVLVVSLVDWTVSL. Residues 177–183 lie on the Extracellular side of the membrane; that stretch reads SLVCHEP. Residues 184–204 form a helical membrane-spanning segment; the sequence is LRIRRLLRPFFLLQNSSMMKK. Residues 203–207 form an interaction with phosphatidylinositol 3,5-bisphosphate region; the sequence is KKTLK. Residues 205–218 are Cytoplasmic-facing; that stretch reads TLKCIRWSLPEMAS. The chain crosses the membrane as a helical span at residues 219–239; sequence VGLLLAIHLCLFTMFGMLLFA. Residues 240 to 254 are Extracellular-facing; sequence GGKQDDGQDRERLTY. The helical; Pore-forming intramembrane region spans 255–279; that stretch reads FQNLPESLTSLLVLLTTANNPDVMI. Topologically, residues 280–289 are extracellular; it reads PAYSKNRAYA. Residues 290–310 traverse the membrane as a helical segment; the sequence is IFFIVFTVIGSLFLMNLLTAI. Topologically, residues 311–436 are cytoplasmic; the sequence is IYSQFRGYLM…FLFGHYYFDY (126 aa). The chain crosses the membrane as a helical span at residues 437–459; sequence LGNLIALANLVSICVFLVLDADV. Over 460 to 465 the chain is Extracellular; it reads LPAERD. A helical transmembrane segment spans residues 466-486; sequence DFILGILNCVFIVYYLLEMLL. Residues 487–502 are Cytoplasmic-facing; that stretch reads KVFALGLRGYLSYPSN. The helical transmembrane segment at 503–523 threads the bilayer; sequence VFDGLLTVVLLVLEISTLAVY. At 524 to 554 the chain is on the extracellular side; sequence RLPHPGWRPEMVGLLSLWDMTRMLNMLIVFR. The helical transmembrane segment at 555-575 threads the bilayer; it reads FLRIIPSMKLMAVVASTVLGL. At 576–580 the chain is on the cytoplasmic side; it reads VQNMR. A helical transmembrane segment spans residues 581 to 601; the sequence is AFGGILVVVYYVFAIIGINLF. Topologically, residues 602–635 are extracellular; sequence RGVIVALPGNSSLAPANGSAPCGSFEQLEYWANN. 2 N-linked (GlcNAc...) asparagine glycosylation sites follow: Asn-611 and Asn-618. The segment at residues 636–658 is an intramembrane region (helical; Pore-forming); that stretch reads FDDFAAALVTLWNLMVVNNWQVF. Over 659–673 the chain is Extracellular; the sequence is LDAYRRYSGPWSKIY. A helical transmembrane segment spans residues 674 to 694; the sequence is FVLWWLVSSVIWVNLFLALIL. The Cytoplasmic segment spans residues 695–752; that stretch reads ENFLHKWDPRSHLQPLAGTPEATYQMTVELLFRDILEEPGEDELTERLSQHPHLWLCR.

This sequence belongs to the calcium channel alpha-1 subunit (TC 1.A.1.11) family. Two pore calcium channel subfamily. In terms of assembly, homodimer. Interacts with LRRK2. Interacts with HAX1. Interacts with MTOR; the interaction is required for TPCN2 ATP sensitivity. Found in a complex with LSM12, TPCN1 and TPCN2. Interacts with LSM12. N-glycosylated. In terms of tissue distribution, widely expressed. Expressed at high level in liver and kidney.

The protein resides in the late endosome membrane. It localises to the lysosome membrane. Its subcellular location is the melanosome membrane. The enzyme catalyses Na(+)(in) = Na(+)(out). It carries out the reaction Ca(2+)(in) = Ca(2+)(out). Regulated by Mg(2+) ions, cytosolic Mg(2+) selectively inhibits outward current while lysosomal Mg(2+) modestly inhibits both the outward and inward currents. In the absence of Mg(2+), NAADP readily activates TPCN2, with properties similar to PI(3,5)P2. Na(+) current is inhibited by ATP in a MTORC-dependent manner. ATP sensitivity is independent of PI(3,5)P2. Both current elicited by PI(3,5)P2 as well as NAADP are inhibited by tetrandrine. Functionally, intracellular channel initially characterized as a non-selective Ca(2+)-permeable channel activated by NAADP (nicotinic acid adenine dinucleotide phosphate), it is also a highly-selective Na(+) channel activated directly by PI(3,5)P2 (phosphatidylinositol 3,5-bisphosphate). Localizes to the lysosomal and late endosome membranes where it regulates organellar membrane excitability, membrane trafficking, and pH homeostasis. Is associated with a plethora of physiological processes, including mTOR-dependent nutrient sensing, skin pigmentation and autophagy. Ion selectivity is not fixed but rather agonist-dependent and under defined ionic conditions, can be readily activated by both NAADP and PI(3,5)P2. As calcium channel, it increases the pH in the lysosomal lumen, as sodium channel, it promotes lysosomal exocytosis. Plays a crucial role in endolysosomal trafficking in the endolysosomal degradation pathway and is potentially involved in the homeostatic control of many macromolecules and cell metabolites. Also expressed in melanosomes of pigmented cells where mediates a Ca(2+) channel and/or PI(3,5)P2-activated melanosomal Na(+) channel to acidify pH and inhibit tyrosinase activity required for melanogenesis and pigmentation. Unlike the voltage-dependent TPCN1, TPCN2 is voltage independent and can be activated solely by PI(3,5)P2 binding. In contrast, PI(4,5)P2, PI(3,4)P2, PI(3)P and PI(5)P have no obvious effect on channel activation. Its function is as follows. (Microbial infection) During Ebola virus (EBOV) infection, controls the movement of endosomes containing virus particles and is required by EBOV to escape from the endosomal network into the cell cytoplasm. (Microbial infection) Required for cell entry of coronaviruses SARS-CoV and SARS-CoV-2, as well as human coronavirus EMC (HCoV-EMC), by endocytosis. This chain is Two pore channel protein 2, found in Homo sapiens (Human).